The following is a 100-amino-acid chain: Nucleoid-associated protein ckrop_0143 (100 aa).

It belongs to the YbaB/EbfC family. As to quaternary structure, homodimer.

The protein localises to the cytoplasm. It localises to the nucleoid. Its function is as follows. Binds to DNA and alters its conformation. May be involved in regulation of gene expression, nucleoid organization and DNA protection. This Corynebacterium kroppenstedtii (strain DSM 44385 / JCM 11950 / CIP 105744 / CCUG 35717) protein is Nucleoid-associated protein ckrop_0143.